A 577-amino-acid polypeptide reads, in one-letter code: BICD family-like cargo adapter 1 (577 aa).

The tract at residues 63–100 is disordered; the sequence is LLAAGERSSEPGEHPQAEPESPVEGHGPPLPPPPTQDP. Over residues 69 to 79 the composition is skewed to basic and acidic residues; the sequence is RSSEPGEHPQA. A CC1 box motif is present at residues 116 to 120; sequence AARLG. The stretch at 121-379 forms a coiled coil; the sequence is KALLERNQDM…QLWEAYCQVR (259 aa). The tract at residues 389 to 415 is disordered; that stretch reads DSADSAVSTDSSMDESSETSSAKDVPA. A compositionally biased stretch (low complexity) spans 390–399; that stretch reads SADSAVSTDS. Positions 443–528 form a coiled coil; sequence LSVEMTALKE…LEAWQDDMHR (86 aa).

Belongs to the BICDR family. In terms of assembly, part of a tripartite complex with dynein and dynactin, acts an adapter linking the dynein motor complex and dynactin. Interacts with KIF1C. Interacts with RAB6A and RAB6B; interaction is specific to Rab6. In terms of tissue distribution, highly expressed during early embryonic development. Predominantly expressed in kidney, undifferentiated neural tissue and developing eye.

The protein resides in the cytoplasm. The protein localises to the cytoskeleton. Its subcellular location is the microtubule organizing center. It is found in the centrosome. Its function is as follows. Acts as an adapter protein linking the dynein motor complex to various cargos and converts dynein from a non-processive to a highly processive motor in the presence of dynactin. Facilitates the interaction between dynein and dynactin and activates dynein processivity (the ability to move along a microtubule for a long distance without falling off the track). Predominantly recruits 2 dyneins, which increases both the force and speed of the microtubule motor. Component of secretory vesicle machinery in developing neurons that acts as a regulator of neurite outgrowth. Regulates the secretory vesicle transport by controlling the accumulation of Rab6-containing secretory vesicles in the pericentrosomal region restricting anterograde secretory transport during the early phase of neuronal differentiation, thereby inhibiting neuritogenesis. This chain is BICD family-like cargo adapter 1 (Bicdl1), found in Mus musculus (Mouse).